Consider the following 296-residue polypeptide: Pantothenate synthetase (296 aa).

Residue methionine 37–histidine 44 coordinates ATP. Histidine 44 serves as the catalytic Proton donor. Glutamine 68 is a binding site for (R)-pantoate. Glutamine 68 is a binding site for beta-alanine. An ATP-binding site is contributed by glycine 160–aspartate 163. (R)-pantoate is bound at residue glutamine 166. ATP is bound by residues valine 189 and threonine 197 to arginine 200.

It belongs to the pantothenate synthetase family. In terms of assembly, homodimer.

The protein resides in the cytoplasm. It catalyses the reaction (R)-pantoate + beta-alanine + ATP = (R)-pantothenate + AMP + diphosphate + H(+). Its pathway is cofactor biosynthesis; (R)-pantothenate biosynthesis; (R)-pantothenate from (R)-pantoate and beta-alanine: step 1/1. Its function is as follows. Catalyzes the condensation of pantoate with beta-alanine in an ATP-dependent reaction via a pantoyl-adenylate intermediate. This is Pantothenate synthetase from Thermobifida fusca (strain YX).